The chain runs to 197 residues: Holliday junction resolvase RecU (197 aa).

The segment at 1-21 is disordered; sequence MVNYPSGVRAGGYPQKKKNQN. 4 residues coordinate Mg(2+): Thr-82, Asp-84, Asp-97, and Gln-116.

Belongs to the RecU family. Mg(2+) serves as cofactor.

Its subcellular location is the cytoplasm. It carries out the reaction Endonucleolytic cleavage at a junction such as a reciprocal single-stranded crossover between two homologous DNA duplexes (Holliday junction).. Its function is as follows. Endonuclease that resolves Holliday junction intermediates in genetic recombination. Cleaves mobile four-strand junctions by introducing symmetrical nicks in paired strands. Promotes annealing of linear ssDNA with homologous dsDNA. Required for DNA repair, homologous recombination and chromosome segregation. This Oenococcus oeni (strain ATCC BAA-331 / PSU-1) protein is Holliday junction resolvase RecU.